The following is a 208-amino-acid chain: Large ribosomal subunit protein uL4 (208 aa).

The interval 45-78 is disordered; it reads RQGTAKSKERSEMSGSTRKLGRQKGSGGARRGDI.

The protein belongs to the universal ribosomal protein uL4 family. Part of the 50S ribosomal subunit.

Its function is as follows. One of the primary rRNA binding proteins, this protein initially binds near the 5'-end of the 23S rRNA. It is important during the early stages of 50S assembly. It makes multiple contacts with different domains of the 23S rRNA in the assembled 50S subunit and ribosome. Forms part of the polypeptide exit tunnel. The sequence is that of Large ribosomal subunit protein uL4 from Azobacteroides pseudotrichonymphae genomovar. CFP2.